The chain runs to 541 residues: Major facilitator-type transporter ecdD (541 aa).

The chain crosses the membrane as a helical span at residues 15–35 (AWPAILISGFVAFGGILFGYD). N64 is a glycosylation site (N-linked (GlcNAc...) asparagine). The next 4 helical transmembrane spans lie at 72 to 92 (AIVS…SPMG), 106 to 126 (GIFV…PFLA), 129 to 149 (FFAG…QSET), and 156 to 176 (GFIV…ASVL). Residues N178 and N184 are each glycosylated (N-linked (GlcNAc...) asparagine). The helical transmembrane segment at 191–211 (IPIAVQFAWSIILVGGMLILP) threads the bilayer. An N-linked (GlcNAc...) asparagine glycan is attached at N253. 6 helical membrane passes run 277–297 (LVTG…FIMY), 313–333 (VITL…LYAI), 340–360 (PVLL…AVLG), 384–404 (IAFI…SAWV), 418–440 (SLSM…TPYL), and 454–474 (IFFI…FMIY).

It belongs to the major facilitator superfamily. Sugar transporter (TC 2.A.1.1) family.

The protein resides in the membrane. This chain is Major facilitator-type transporter ecdD, found in Aspergillus rugulosus (Emericella rugulosa).